Consider the following 148-residue polypeptide: Deoxyuridine 5'-triphosphate nucleotidohydrolase (148 aa).

Substrate-binding positions include Arg-68–Gly-70, Asn-81, Thr-85–Asp-87, and Lys-95.

This sequence belongs to the dUTPase family. Requires Mg(2+) as cofactor.

It carries out the reaction dUTP + H2O = dUMP + diphosphate + H(+). Its pathway is pyrimidine metabolism; dUMP biosynthesis; dUMP from dCTP (dUTP route): step 2/2. In terms of biological role, this enzyme is involved in nucleotide metabolism: it produces dUMP, the immediate precursor of thymidine nucleotides and it decreases the intracellular concentration of dUTP so that uracil cannot be incorporated into DNA. The protein is Deoxyuridine 5'-triphosphate nucleotidohydrolase of Rickettsia felis (strain ATCC VR-1525 / URRWXCal2) (Rickettsia azadi).